We begin with the raw amino-acid sequence, 233 residues long: Large ribosomal subunit protein uL1 (233 aa).

This sequence belongs to the universal ribosomal protein uL1 family. In terms of assembly, part of the 50S ribosomal subunit.

Its function is as follows. Binds directly to 23S rRNA. The L1 stalk is quite mobile in the ribosome, and is involved in E site tRNA release. Protein L1 is also a translational repressor protein, it controls the translation of the L11 operon by binding to its mRNA. The protein is Large ribosomal subunit protein uL1 of Psychrobacter cryohalolentis (strain ATCC BAA-1226 / DSM 17306 / VKM B-2378 / K5).